The chain runs to 261 residues: Ribosomal RNA small subunit methyltransferase J (261 aa).

Residues 109–110, 125–126, and aspartate 179 each bind S-adenosyl-L-methionine; these read RD and ER.

It belongs to the methyltransferase superfamily. RsmJ family.

It localises to the cytoplasm. The enzyme catalyses guanosine(1516) in 16S rRNA + S-adenosyl-L-methionine = N(2)-methylguanosine(1516) in 16S rRNA + S-adenosyl-L-homocysteine + H(+). In terms of biological role, specifically methylates the guanosine in position 1516 of 16S rRNA. The chain is Ribosomal RNA small subunit methyltransferase J from Pseudomonas aeruginosa (strain UCBPP-PA14).